Consider the following 188-residue polypeptide: ATP synthase subunit b (188 aa).

Residues 5–25 form a helical membrane-spanning segment; the sequence is MLLIFMMIVMIASSAMAAEAE.

This sequence belongs to the ATPase B chain family. As to quaternary structure, F-type ATPases have 2 components, F(1) - the catalytic core - and F(0) - the membrane proton channel. F(1) has five subunits: alpha(3), beta(3), gamma(1), delta(1), epsilon(1). F(0) has three main subunits: a(1), b(2) and c(10-14). The alpha and beta chains form an alternating ring which encloses part of the gamma chain. F(1) is attached to F(0) by a central stalk formed by the gamma and epsilon chains, while a peripheral stalk is formed by the delta and b chains.

It localises to the cell inner membrane. Its function is as follows. F(1)F(0) ATP synthase produces ATP from ADP in the presence of a proton or sodium gradient. F-type ATPases consist of two structural domains, F(1) containing the extramembraneous catalytic core and F(0) containing the membrane proton channel, linked together by a central stalk and a peripheral stalk. During catalysis, ATP synthesis in the catalytic domain of F(1) is coupled via a rotary mechanism of the central stalk subunits to proton translocation. Component of the F(0) channel, it forms part of the peripheral stalk, linking F(1) to F(0). The polypeptide is ATP synthase subunit b (Thermodesulfovibrio yellowstonii (strain ATCC 51303 / DSM 11347 / YP87)).